A 396-amino-acid polypeptide reads, in one-letter code: Zinc metalloproteinase nas-19 (396 aa).

A signal peptide spans 1–20; that stretch reads MVRLIHLIGAIILLFSYAYC. In terms of domain architecture, Peptidase M12A spans 38 to 231; that stretch reads RVKRQFERLG…YKINQYYGCW (194 aa). Residue Asn79 is glycosylated (N-linked (GlcNAc...) asparagine). 4 cysteine pairs are disulfide-bonded: Cys82/Cys230, Cys105/Cys130, Cys232/Cys252, and Cys254/Cys263. His138 is a binding site for Zn(2+). The active site involves Glu139. Positions 142 and 148 each coordinate Zn(2+). One can recognise an EGF-like domain in the interval 225-264; that stretch reads NQYYGCWCSKQLECKNGGYTSPSDCSRCNCPKGFFGNLCD. The N-linked (GlcNAc...) asparagine glycan is linked to Asn310.

Requires Zn(2+) as cofactor.

It is found in the secreted. Its function is as follows. Metalloprotease. The sequence is that of Zinc metalloproteinase nas-19 (nas-19) from Caenorhabditis elegans.